We begin with the raw amino-acid sequence, 506 residues long: Gamma-aminobutyric acid receptor subunit epsilon (506 aa).

The first 17 residues, 1 to 17 (MLPKVLLMLLNMFLALQ), serve as a signal peptide directing secretion. At 18–277 (WRVGPHIKLE…MTFFFNVSRR (260 aa)) the chain is on the extracellular side. The segment at 32 to 65 (AQDKVVFGPQPQPSGKKLPARETELTADHTTERP) is disordered. Residues 50-65 (PARETELTADHTTERP) are compositionally biased toward basic and acidic residues. Residue N135 is glycosylated (N-linked (GlcNAc...) asparagine). An intrachain disulfide couples C196 to C210. A glycan (N-linked (GlcNAc...) asparagine) is linked at N253. A helical transmembrane segment spans residues 278 to 298 (FGFIVFQNYIPSSVTTMLSWV). The Cytoplasmic segment spans residues 299-308 (SFWIKIEAAA). The helical transmembrane segment at 309-328 (ARASVGVSSVLTMATLGTFS) threads the bilayer. Topologically, residues 329 to 344 (RKNFPRVSYLTALDFY) are extracellular. A helical transmembrane segment spans residues 345-365 (IAICFVLCFCTLLEFTVLNFL). Topologically, residues 366–485 (TYNNIERQAS…HVYRLDNYSR (120 aa)) are cytoplasmic. The chain crosses the membrane as a helical span at residues 486–506 (VLFPITFFFFNVVYWVICLNL).

The protein belongs to the ligand-gated ion channel (TC 1.A.9) family. Gamma-aminobutyric acid receptor (TC 1.A.9.5) subfamily. GABRE sub-subfamily. As to quaternary structure, heteropentamer, formed by a combination of alpha (GABRA1-6), beta (GABRB1-3), gamma (GABRG1-3), delta (GABRD), epsilon (GABRE), rho (GABRR1-3), pi (GABRP) and theta (GABRQ) chains, each subunit exhibiting distinct physiological and pharmacological properties. As to expression, expressed in brain and heart. Strongly expressed in locus ceruleus from the first postnatal day. Weakly expressed in other brainstem nuclei and in the hypothalamus. Found in the cerebral cortex of pups.

Its subcellular location is the cell membrane. It is found in the postsynaptic cell membrane. It carries out the reaction chloride(in) = chloride(out). Its function is as follows. Epsilon subunit of the heteropentameric ligand-gated chloride channel gated by gamma-aminobutyric acid (GABA), a major inhibitory neurotransmitter in the brain. GABA-gated chloride channels, also named GABA(A) receptors (GABAAR), consist of five subunits arranged around a central pore and contain GABA active binding site(s) located at the alpha and beta subunit interfaces. When activated by GABA, GABAARs selectively allow the flow of chloride anions across the cell membrane down their electrochemical gradient. GABARs containing epsilon subunit may also permit spontaneous chloride channel activity while preserving the structural information required for GABA-gated openings. GABARs containing epsilon subunit may regulate cardiac function. The chain is Gamma-aminobutyric acid receptor subunit epsilon from Rattus norvegicus (Rat).